The sequence spans 143 residues: Rheacalcin-2 (143 aa).

3 disulfides stabilise this stretch: Cys-6-Cys-17, Cys-34-Cys-139, and Cys-114-Cys-131. Residues 13–140 (FDGRCFGFFP…CSDRKPFICE (128 aa)) enclose the C-type lectin domain. Phosphoserine occurs at positions 66 and 68.

It localises to the secreted. Its subcellular location is the extracellular space. The protein localises to the extracellular matrix. In Rhea americana (Greater rhea), this protein is Rheacalcin-2.